Here is a 559-residue protein sequence, read N- to C-terminus: Protein GRAVITROPIC IN THE LIGHT 1 (559 aa).

A disordered region spans residues 107-127 (AVNRREEYDTEEEENEEEGEI). Acidic residues predominate over residues 114–127 (YDTEEEENEEEGEI).

Required for red (R) and far red (FR) light-induced and phytochrome-mediated deregulation of negative gravitropism leading to randomization of hypocotyl growth orientation. The protein is Protein GRAVITROPIC IN THE LIGHT 1 of Arabidopsis thaliana (Mouse-ear cress).